The sequence spans 454 residues: Protein odr-4 homolog (454 aa).

2 helical membrane passes run 82–102 and 432–452; these read MLPG…ELAN and IGVI…FHYF.

This sequence belongs to the ODR-4 family.

It localises to the membrane. In terms of biological role, may play a role in the trafficking of a subset of G-protein coupled receptors. The sequence is that of Protein odr-4 homolog (ODR4) from Pongo abelii (Sumatran orangutan).